The following is a 139-amino-acid chain: D-ribose pyranase (139 aa).

The active-site Proton donor is the His-20. Residues Asp-28, His-106, and 128-130 (YAN) each bind substrate.

It belongs to the RbsD / FucU family. RbsD subfamily. Homodecamer.

The protein localises to the cytoplasm. The enzyme catalyses beta-D-ribopyranose = beta-D-ribofuranose. Its pathway is carbohydrate metabolism; D-ribose degradation; D-ribose 5-phosphate from beta-D-ribopyranose: step 1/2. In terms of biological role, catalyzes the interconversion of beta-pyran and beta-furan forms of D-ribose. In Actinobacillus succinogenes (strain ATCC 55618 / DSM 22257 / CCUG 43843 / 130Z), this protein is D-ribose pyranase.